The chain runs to 478 residues: Leukotoxin secretion protein D (478 aa).

At 1 to 59 the chain is on the cytoplasmic side; sequence MKIWLSGIYEFFLRYKNTWAEVWKIRKELDHPNRKKDESEFLPAHLDLIETPVSKKPRL. The chain crosses the membrane as a helical span at residues 60–80; sequence IAYLIMLFLVVAIVLASVSKV. Residues 81–478 lie on the Periplasmic side of the membrane; sequence EIVATAPGKL…ESVTESLRER (398 aa).

This sequence belongs to the membrane fusion protein (MFP) (TC 8.A.1) family.

The protein localises to the cell inner membrane. Functionally, involved in the transport of the Leukotoxin. The chain is Leukotoxin secretion protein D (lktD) from Mannheimia haemolytica (Pasteurella haemolytica).